The following is a 301-amino-acid chain: Transcriptional activator protein NhaR (301 aa).

One can recognise an HTH lysR-type domain in the interval 6 to 63; it reads INYNHLYYFWHVYKEGSVVGAAEALYLTPQTITGQIRALEERLQGKLFKRKGRGLEPS. The H-T-H motif DNA-binding region spans 23 to 42; sequence VVGAAEALYLTPQTITGQIR.

This sequence belongs to the LysR transcriptional regulatory family.

It is found in the cytoplasm. Its function is as follows. Plays a role in the positive regulation of NhaA. This is Transcriptional activator protein NhaR (nhaR) from Escherichia coli (strain K12).